The following is a 423-amino-acid chain: Zinc-type alcohol dehydrogenase-like protein C1198.01 (423 aa).

Residues 14–36 (KQLGHREVSEGSTQPKPDPSGAT) are disordered. Zn(2+) contacts are provided by cysteine 74, histidine 97, cysteine 127, cysteine 130, cysteine 133, and cysteine 141.

Belongs to the zinc-containing alcohol dehydrogenase family. Class-III subfamily. Zn(2+) is required as a cofactor.

The protein localises to the golgi apparatus. This Schizosaccharomyces pombe (strain 972 / ATCC 24843) (Fission yeast) protein is Zinc-type alcohol dehydrogenase-like protein C1198.01.